A 29-amino-acid polypeptide reads, in one-letter code: Omega-conotoxins GVIIA/GVIIB (29 aa).

Disulfide bonds link Cys1-Cys16, Cys8-Cys19, and Cys15-Cys26. Pro4 and Pro7 each carry 4-hydroxyproline.

Expressed by the venom duct.

The protein resides in the secreted. Functionally, omega-conotoxins act at presynaptic membranes, they bind and block voltage-gated calcium channels (Cav). The polypeptide is Omega-conotoxins GVIIA/GVIIB (Conus geographus (Geography cone)).